Here is a 108-residue protein sequence, read N- to C-terminus: Integration host factor subunit alpha (108 aa).

It belongs to the bacterial histone-like protein family. As to quaternary structure, heterodimer of an alpha and a beta chain.

This protein is one of the two subunits of integration host factor, a specific DNA-binding protein that functions in genetic recombination as well as in transcriptional and translational control. In Rhodopseudomonas palustris (strain BisB18), this protein is Integration host factor subunit alpha.